The primary structure comprises 217 residues: Adenylate kinase (217 aa).

11–16 (GAGKGT) lines the ATP pocket. The segment at 31-60 (STGDMFREAMANETPVGLEAKSYIDKGNLV) is NMP. Residues threonine 32, arginine 37, 58–60 (NLV), 86–89 (GFPR), and glutamine 93 contribute to the AMP site. The segment at 127 to 165 (ARYICKKCGATYNKISNPTKVEGTCDRCGGHEFFQREDD) is LID. Arginine 128 contacts ATP. Cysteine 131 and cysteine 134 together coordinate Zn(2+). 137–138 (TY) contacts ATP. Zn(2+) is bound by residues cysteine 151 and cysteine 154. Residues arginine 162 and arginine 173 each coordinate AMP. Glutamine 201 provides a ligand contact to ATP.

It belongs to the adenylate kinase family. As to quaternary structure, monomer.

The protein localises to the cytoplasm. It catalyses the reaction AMP + ATP = 2 ADP. It functions in the pathway purine metabolism; AMP biosynthesis via salvage pathway; AMP from ADP: step 1/1. In terms of biological role, catalyzes the reversible transfer of the terminal phosphate group between ATP and AMP. Plays an important role in cellular energy homeostasis and in adenine nucleotide metabolism. The chain is Adenylate kinase from Lactobacillus johnsonii (strain CNCM I-12250 / La1 / NCC 533).